The sequence spans 188 residues: Augmin complex subunit dgt4 (188 aa).

Positions 141 to 163 form a coiled coil; the sequence is QREFAQNQEALRSLRTAVDGLEN.

As to quaternary structure, component of the augmin complex composed of dgt2, dgt3, dgt4, dgt5, dgt6, msd1, msd5 and wac. The complex interacts directly or indirectly with microtubules and is required for centrosome-independent generation of spindle microtubules.

The protein resides in the cytoplasm. The protein localises to the cytoskeleton. It is found in the spindle. In terms of biological role, as part of the augmin complex, plays a role in centrosome-independent generation of spindle microtubules. The complex is required for mitotic spindle assembly through its involvement in localizing gamma-tubulin to spindle microtubules. In Drosophila melanogaster (Fruit fly), this protein is Augmin complex subunit dgt4.